The following is a 419-amino-acid chain: Protein FAM217A (419 aa).

Disordered stretches follow at residues 1–60 (MGRK…LENP), 96–119 (KGSTVDKRNSSVEENVTDESDLSE), 236–299 (SSSK…SRAL), and 317–382 (KNSK…RTKK). The segment covering 7 to 19 (ESCSSSLHVSSIS) has biased composition (low complexity). The segment covering 236–251 (SSSKAIATKAKAPKIP) has biased composition (low complexity). 2 stretches are compositionally biased toward polar residues: residues 252–261 (ETSTLQTSGV) and 271–281 (NSGSGKPEQNV). Low complexity-rich tracts occupy residues 282-296 (SKWSLSSAGKSKSNS) and 334-345 (PTTTTQATQPMA).

Belongs to the FAM217 family.

The protein is Protein FAM217A (Fam217a) of Mus musculus (Mouse).